The chain runs to 220 residues: Metalloproteinase inhibitor 2 (220 aa).

A signal peptide spans Met-1–Ala-26. Cys-27 lines the Zn(2+) pocket. 2 involved in metalloproteinase-binding regions span residues Cys-27–Ser-30 and Thr-95–Glu-96. 6 disulfide bridges follow: Cys-27-Cys-98, Cys-29-Cys-127, Cys-39-Cys-152, Cys-154-Cys-201, Cys-159-Cys-164, and Cys-172-Cys-193. The NTR domain maps to Cys-27 to Cys-152.

Belongs to the protease inhibitor I35 (TIMP) family. In terms of processing, the activity of TIMP2 is dependent on the presence of disulfide bonds.

The protein resides in the secreted. Functionally, complexes with metalloproteinases (such as collagenases) and irreversibly inactivates them by binding to their catalytic zinc cofactor. This chain is Metalloproteinase inhibitor 2 (TIMP2), found in Gallus gallus (Chicken).